The chain runs to 327 residues: Biotin synthase (327 aa).

The region spanning 42 to 268 (NKVQKASLLS…VMPASTVRLS (227 aa)) is the Radical SAM core domain. Residues C57, C61, and C64 each coordinate [4Fe-4S] cluster. 4 residues coordinate [2Fe-2S] cluster: C102, C134, C194, and R266.

It belongs to the radical SAM superfamily. Biotin synthase family. Homodimer. The cofactor is [4Fe-4S] cluster. [2Fe-2S] cluster serves as cofactor.

The enzyme catalyses (4R,5S)-dethiobiotin + (sulfur carrier)-SH + 2 reduced [2Fe-2S]-[ferredoxin] + 2 S-adenosyl-L-methionine = (sulfur carrier)-H + biotin + 2 5'-deoxyadenosine + 2 L-methionine + 2 oxidized [2Fe-2S]-[ferredoxin]. It functions in the pathway cofactor biosynthesis; biotin biosynthesis; biotin from 7,8-diaminononanoate: step 2/2. Its function is as follows. Catalyzes the conversion of dethiobiotin (DTB) to biotin by the insertion of a sulfur atom into dethiobiotin via a radical-based mechanism. The sequence is that of Biotin synthase from Rhizobium rhizogenes (strain K84 / ATCC BAA-868) (Agrobacterium radiobacter).